Consider the following 305-residue polypeptide: NAD kinase (305 aa).

Asp-84 serves as the catalytic Proton acceptor. NAD(+)-binding positions include 84 to 85 (DG), 159 to 160 (NE), His-170, Arg-187, Asp-189, 200 to 205 (TAYSLS), and Gln-260.

It belongs to the NAD kinase family. The cofactor is a divalent metal cation.

It localises to the cytoplasm. It carries out the reaction NAD(+) + ATP = ADP + NADP(+) + H(+). Involved in the regulation of the intracellular balance of NAD and NADP, and is a key enzyme in the biosynthesis of NADP. Catalyzes specifically the phosphorylation on 2'-hydroxyl of the adenosine moiety of NAD to yield NADP. In Pasteurella multocida (strain Pm70), this protein is NAD kinase.